Consider the following 169-residue polypeptide: Peptide methionine sulfoxide reductase MsrA 1 (169 aa).

The active site involves Cys-12.

It belongs to the MsrA Met sulfoxide reductase family.

The catalysed reaction is L-methionyl-[protein] + [thioredoxin]-disulfide + H2O = L-methionyl-(S)-S-oxide-[protein] + [thioredoxin]-dithiol. The enzyme catalyses [thioredoxin]-disulfide + L-methionine + H2O = L-methionine (S)-S-oxide + [thioredoxin]-dithiol. Functionally, has an important function as a repair enzyme for proteins that have been inactivated by oxidation. Catalyzes the reversible oxidation-reduction of methionine sulfoxide in proteins to methionine. In Staphylococcus aureus (strain Mu50 / ATCC 700699), this protein is Peptide methionine sulfoxide reductase MsrA 1 (msrA1).